Reading from the N-terminus, the 291-residue chain is Glucose and ribitol dehydrogenase (291 aa).

A disordered region spans residues 1–35 (MASGGQFPPQKQESQPGKEHLMDPSPQHASPHYKP). Residue 45 to 69 (LVTGGDSGIGRSVCYHFALEGATVA) coordinates NAD(+). A substrate-binding site is contributed by Ser-183. Tyr-196 functions as the Proton acceptor in the catalytic mechanism.

It belongs to the short-chain dehydrogenases/reductases (SDR) family. Expressed in embryogenic cells, somatic embryos and seeds in the later stages of development, but not in non-embryogenic cells and mature leaves.

May act as a short alcohol-polyol-sugar dehydrogenase possibly related to carbohydrate metabolism and the acquisition of desiccation tolerance. May also be involved in signal transduction. The polypeptide is Glucose and ribitol dehydrogenase (CAISE5) (Daucus carota (Wild carrot)).